The sequence spans 221 residues: Carbonic anhydrase (221 aa).

Zn(2+)-binding residues include cysteine 38, aspartate 40, histidine 99, and cysteine 102.

It belongs to the beta-class carbonic anhydrase family. It depends on Zn(2+) as a cofactor.

It carries out the reaction hydrogencarbonate + H(+) = CO2 + H2O. The protein is Carbonic anhydrase (cynT) of Helicobacter pylori (strain J99 / ATCC 700824) (Campylobacter pylori J99).